The sequence spans 164 residues: Probable calcium-binding protein CML17 (164 aa).

4 consecutive EF-hand domains span residues 4-39, 40-75, 88-123, and 126-161; these read DQQA…LGMP, VHRE…VMRV, VDEA…LGIK, and RTAE…GAFA. Residues Asp-17, Asp-19, Asp-21, Arg-23, Glu-28, Asp-53, Asn-55, Asp-57, Cys-59, Glu-64, Asp-101, Asn-103, Asp-105, Glu-112, Asp-139, Asp-141, Asp-143, Arg-145, and Glu-150 each contribute to the Ca(2+) site.

In terms of biological role, potential calcium sensor. The protein is Probable calcium-binding protein CML17 (CML17) of Oryza sativa subsp. japonica (Rice).